A 230-amino-acid chain; its full sequence is Ribonuclease 3 (230 aa).

One can recognise an RNase III domain in the interval 5–134; sequence EALLKSSFAI…FLGALLLDKG (130 aa). A Mg(2+)-binding site is contributed by Glu47. The active site involves Asp51. Positions 120 and 123 each coordinate Mg(2+). Residue Glu123 is part of the active site. One can recognise a DRBM domain in the interval 160 to 229; sequence DYKTSLQEIL…AENALKALSE (70 aa).

It belongs to the ribonuclease III family. In terms of assembly, homodimer. Requires Mg(2+) as cofactor.

Its subcellular location is the cytoplasm. The enzyme catalyses Endonucleolytic cleavage to 5'-phosphomonoester.. Its function is as follows. Digests double-stranded RNA. Involved in the processing of primary rRNA transcript to yield the immediate precursors to the large and small rRNAs (23S and 16S). Processes some mRNAs, and tRNAs when they are encoded in the rRNA operon. Processes pre-crRNA and tracrRNA of type II CRISPR loci if present in the organism. The protein is Ribonuclease 3 of Streptococcus uberis (strain ATCC BAA-854 / 0140J).